The primary structure comprises 348 residues: L-threonine 3-dehydrogenase (348 aa).

Cys42 serves as a coordination point for Zn(2+). Active-site charge relay system residues include Thr44 and His47. Zn(2+) contacts are provided by His67, Glu68, Cys97, Cys100, Cys103, and Cys111. NAD(+) contacts are provided by residues Leu179, Glu199, Arg204, 266 to 268 (LGL), and 291 to 292 (IT).

It belongs to the zinc-containing alcohol dehydrogenase family. Homotetramer. The cofactor is Zn(2+).

Its subcellular location is the cytoplasm. The enzyme catalyses L-threonine + NAD(+) = (2S)-2-amino-3-oxobutanoate + NADH + H(+). It functions in the pathway amino-acid degradation; L-threonine degradation via oxydo-reductase pathway; glycine from L-threonine: step 1/2. Functionally, catalyzes the NAD(+)-dependent oxidation of L-threonine to 2-amino-3-ketobutyrate. The protein is L-threonine 3-dehydrogenase of Pyrococcus abyssi (strain GE5 / Orsay).